We begin with the raw amino-acid sequence, 455 residues long: Bifunctional protein GlmU (455 aa).

The pyrophosphorylase stretch occupies residues 1–230 (MSNRFAVILA…VEETLGVNDR (230 aa)). Residues 9–12 (LAAG), lysine 23, glutamine 73, and 78–79 (GT) contribute to the UDP-N-acetyl-alpha-D-glucosamine site. Position 103 (aspartate 103) interacts with Mg(2+). Positions 140, 155, 170, and 228 each coordinate UDP-N-acetyl-alpha-D-glucosamine. Asparagine 228 contacts Mg(2+). The tract at residues 231-251 (VALAQAEQVMKRRINEAWMRK) is linker. An N-acetyltransferase region spans residues 252–455 (GVTFIDPEQT…KEHYVTKKNN (204 aa)). 2 residues coordinate UDP-N-acetyl-alpha-D-glucosamine: arginine 333 and lysine 351. Histidine 363 (proton acceptor) is an active-site residue. Positions 366 and 377 each coordinate UDP-N-acetyl-alpha-D-glucosamine. Acetyl-CoA is bound by residues 386 to 387 (NY), alanine 423, and arginine 440.

It in the N-terminal section; belongs to the N-acetylglucosamine-1-phosphate uridyltransferase family. This sequence in the C-terminal section; belongs to the transferase hexapeptide repeat family. As to quaternary structure, homotrimer. Requires Mg(2+) as cofactor.

Its subcellular location is the cytoplasm. The enzyme catalyses alpha-D-glucosamine 1-phosphate + acetyl-CoA = N-acetyl-alpha-D-glucosamine 1-phosphate + CoA + H(+). It catalyses the reaction N-acetyl-alpha-D-glucosamine 1-phosphate + UTP + H(+) = UDP-N-acetyl-alpha-D-glucosamine + diphosphate. It functions in the pathway nucleotide-sugar biosynthesis; UDP-N-acetyl-alpha-D-glucosamine biosynthesis; N-acetyl-alpha-D-glucosamine 1-phosphate from alpha-D-glucosamine 6-phosphate (route II): step 2/2. The protein operates within nucleotide-sugar biosynthesis; UDP-N-acetyl-alpha-D-glucosamine biosynthesis; UDP-N-acetyl-alpha-D-glucosamine from N-acetyl-alpha-D-glucosamine 1-phosphate: step 1/1. It participates in bacterial outer membrane biogenesis; LPS lipid A biosynthesis. In terms of biological role, catalyzes the last two sequential reactions in the de novo biosynthetic pathway for UDP-N-acetylglucosamine (UDP-GlcNAc). The C-terminal domain catalyzes the transfer of acetyl group from acetyl coenzyme A to glucosamine-1-phosphate (GlcN-1-P) to produce N-acetylglucosamine-1-phosphate (GlcNAc-1-P), which is converted into UDP-GlcNAc by the transfer of uridine 5-monophosphate (from uridine 5-triphosphate), a reaction catalyzed by the N-terminal domain. The polypeptide is Bifunctional protein GlmU (Halalkalibacterium halodurans (strain ATCC BAA-125 / DSM 18197 / FERM 7344 / JCM 9153 / C-125) (Bacillus halodurans)).